The chain runs to 151 residues: Deoxyuridine 5'-triphosphate nucleotidohydrolase (151 aa).

Substrate is bound by residues 70 to 72 (RSG), Asn-83, 87 to 89 (LID), and Met-97.

The protein belongs to the dUTPase family. It depends on Mg(2+) as a cofactor.

It carries out the reaction dUTP + H2O = dUMP + diphosphate + H(+). The protein operates within pyrimidine metabolism; dUMP biosynthesis; dUMP from dCTP (dUTP route): step 2/2. Functionally, this enzyme is involved in nucleotide metabolism: it produces dUMP, the immediate precursor of thymidine nucleotides and it decreases the intracellular concentration of dUTP so that uracil cannot be incorporated into DNA. In Stutzerimonas stutzeri (strain A1501) (Pseudomonas stutzeri), this protein is Deoxyuridine 5'-triphosphate nucleotidohydrolase.